The following is a 1432-amino-acid chain: Probable ATP-dependent RNA helicase spindle-E (1432 aa).

Residues 124 to 291 (LAAINAHPVV…FTTTNSVPPV (168 aa)) form the Helicase ATP-binding domain. An ATP-binding site is contributed by 137–144 (GQTGCGKT). Residues 237–240 (DEVH) carry the DEAH box motif. The region spanning 337-524 (KIIMVIDNME…NSVLRAKELE (188 aa)) is the Helicase C-terminal domain. The Tudor domain maps to 936 to 999 (AGAITKGMMV…RLMPKELIQQ (64 aa)).

The protein belongs to the DEAD box helicase family. DEAH subfamily.

The protein resides in the cytoplasm. The enzyme catalyses ATP + H2O = ADP + phosphate + H(+). In terms of biological role, probable ATP-binding RNA helicase which plays a central role during spermatogenesis and oogenesis by repressing transposable elements and preventing their mobilization, which is essential for the germline integrity. Acts via the piRNA metabolic process, which mediates the repression of transposable elements during meiosis by forming complexes composed of piRNAs and Piwi and govern the methylation and subsequent repression of transposons. Involved in the repression of LTR retrotransposon copia. Also involved in telomere regulation by repressing specialized telomeric retroelements HeT-A, TAHRE, and TART; Drosophila telomeres being maintained by transposition of specialized telomeric retroelements. Involved in telomeric trans-silencing, a repression mechanism by which a transposon or a transgene inserted in subtelomeric heterochromatin has the capacity to repress in trans in the female germline, a homologous transposon, or transgene located in euchromatin. Involved in the repression of testis-expressed Stellate genes by the homologous Su(Ste) repeats. Required for anteroposterior and dorsoventral axis formation during oogenesis. The sequence is that of Probable ATP-dependent RNA helicase spindle-E (spn-E) from Drosophila erecta (Fruit fly).